Here is a 218-residue protein sequence, read N- to C-terminus: Mitochondrial fission factor (218 aa).

The Cytoplasmic segment spans residues 1 to 198 (MAEISRIQYE…ENKERAKREM (198 aa)). Thr-89 bears the Phosphothreonine mark. Phosphoserine occurs at positions 129, 131, 146, and 171. A coiled-coil region spans residues 167–198 (VDAASLRRQIIKLNRRLQLLEEENKERAKREM). Residues 199–216 (VMYSITVAFWLLNSWLWF) form a helical; Anchor for type IV membrane protein membrane-spanning segment. Topologically, residues 217-218 (RR) are mitochondrial intermembrane.

It belongs to the Tango11 family. As to quaternary structure, homodimer. Interacts with DNM1L. Interacts with C11orf65/MFI; the interaction inhibits MFF interaction with DNM1L.

Its subcellular location is the mitochondrion outer membrane. The protein resides in the peroxisome. It is found in the cytoplasmic vesicle. It localises to the secretory vesicle. The protein localises to the synaptic vesicle. Its function is as follows. Plays a role in mitochondrial and peroxisomal fission. Promotes the recruitment and association of the fission mediator dynamin-related protein 1 (DNM1L) to the mitochondrial surface. May be involved in regulation of synaptic vesicle membrane dynamics by recruitment of DNM1L to clathrin-containing vesicles. This Bos taurus (Bovine) protein is Mitochondrial fission factor (MFF).